The chain runs to 870 residues: DNA mismatch repair protein MutS (870 aa).

616 to 623 (GPNMAGKS) serves as a coordination point for ATP.

Belongs to the DNA mismatch repair MutS family.

This protein is involved in the repair of mismatches in DNA. It is possible that it carries out the mismatch recognition step. This protein has a weak ATPase activity. This chain is DNA mismatch repair protein MutS, found in Parabacteroides distasonis (strain ATCC 8503 / DSM 20701 / CIP 104284 / JCM 5825 / NCTC 11152).